Reading from the N-terminus, the 324-residue chain is Glycerol-3-phosphate dehydrogenase [NAD(P)+] (324 aa).

3 residues coordinate NADPH: F11, R31, and K107. Sn-glycerol 3-phosphate-binding residues include K107 and G135. Residue A139 coordinates NADPH. The sn-glycerol 3-phosphate site is built by K190, D245, S255, R256, and N257. Catalysis depends on K190, which acts as the Proton acceptor. NADPH is bound at residue R256. V278 and E279 together coordinate NADPH.

It belongs to the NAD-dependent glycerol-3-phosphate dehydrogenase family.

It localises to the cytoplasm. It carries out the reaction sn-glycerol 3-phosphate + NAD(+) = dihydroxyacetone phosphate + NADH + H(+). The catalysed reaction is sn-glycerol 3-phosphate + NADP(+) = dihydroxyacetone phosphate + NADPH + H(+). The protein operates within membrane lipid metabolism; glycerophospholipid metabolism. Its function is as follows. Catalyzes the reduction of the glycolytic intermediate dihydroxyacetone phosphate (DHAP) to sn-glycerol 3-phosphate (G3P), the key precursor for phospholipid synthesis. The sequence is that of Glycerol-3-phosphate dehydrogenase [NAD(P)+] from Anaplasma phagocytophilum (strain HZ).